Here is an 898-residue protein sequence, read N- to C-terminus: Protein translocase subunit SecA (898 aa).

ATP is bound by residues Q87, 105–109, and D512; that span reads GEGKT. The span at 855–865 shows a compositional bias: polar residues; sequence MQYQNNEGTSS. Residues 855–898 are disordered; it reads MQYQNNEGTSSLHEKSEHKIGRNESCPCGSGKKYKHCHGSKAKY. Positions 866-876 are enriched in basic and acidic residues; it reads LHEKSEHKIGR. The Zn(2+) site is built by C880, C882, C891, and H892. The segment covering 886–898 has biased composition (basic residues); that stretch reads KKYKHCHGSKAKY.

This sequence belongs to the SecA family. As to quaternary structure, monomer and homodimer. Part of the essential Sec protein translocation apparatus which comprises SecA, SecYEG and auxiliary proteins SecDF-YajC and YidC. It depends on Zn(2+) as a cofactor.

Its subcellular location is the cell inner membrane. The protein resides in the cytoplasm. It catalyses the reaction ATP + H2O + cellular proteinSide 1 = ADP + phosphate + cellular proteinSide 2.. Functionally, part of the Sec protein translocase complex. Interacts with the SecYEG preprotein conducting channel. Has a central role in coupling the hydrolysis of ATP to the transfer of proteins into and across the cell membrane, serving both as a receptor for the preprotein-SecB complex and as an ATP-driven molecular motor driving the stepwise translocation of polypeptide chains across the membrane. This Histophilus somni (strain 129Pt) (Haemophilus somnus) protein is Protein translocase subunit SecA.